A 108-amino-acid polypeptide reads, in one-letter code: Anthranilate 1,2-dioxygenase ferredoxin subunit (108 aa).

In terms of domain architecture, Rieske spans 9 to 105; that stretch reads WHPLGAIDEF…IRIVDGQVEV (97 aa). [2Fe-2S] cluster contacts are provided by C49, H51, C68, and H71.

The protein belongs to the bacterial ring-hydroxylating dioxygenase ferredoxin component family. In terms of assembly, part of a multicomponent enzyme system composed of a reductase (AndAa), a ferredoxin (AndAb) and a two-subunit oxygenase component (AndAc and AndAd). It depends on [2Fe-2S] cluster as a cofactor.

Its pathway is aromatic compound metabolism; anthranilate degradation via hydroxylation; catechol from anthranilate: step 1/1. Part of the multicomponent anthranilate dioxygenase, that converts anthranilate to catechol. This protein seems to be a 2Fe-2S ferredoxin. In Burkholderia cepacia (Pseudomonas cepacia), this protein is Anthranilate 1,2-dioxygenase ferredoxin subunit.